Consider the following 159-residue polypeptide: Phosphopantetheine adenylyltransferase (159 aa).

Threonine 10 is a substrate binding site. Residues threonine 10 to phenylalanine 11 and histidine 18 each bind ATP. Substrate is bound by residues lysine 42, methionine 74, and arginine 88. ATP contacts are provided by residues glycine 89 to arginine 91, glutamate 99, and tryptophan 124 to serine 130.

The protein belongs to the bacterial CoaD family. In terms of assembly, homohexamer. Mg(2+) serves as cofactor.

The protein resides in the cytoplasm. It carries out the reaction (R)-4'-phosphopantetheine + ATP + H(+) = 3'-dephospho-CoA + diphosphate. Its pathway is cofactor biosynthesis; coenzyme A biosynthesis; CoA from (R)-pantothenate: step 4/5. Functionally, reversibly transfers an adenylyl group from ATP to 4'-phosphopantetheine, yielding dephospho-CoA (dPCoA) and pyrophosphate. This chain is Phosphopantetheine adenylyltransferase, found in Salmonella arizonae (strain ATCC BAA-731 / CDC346-86 / RSK2980).